Here is a 116-residue protein sequence, read N- to C-terminus: Protein RALF-like 33 (116 aa).

The first 23 residues, 1-23 (MRGLSTKPVAIIIAILTVHFLFA), serve as a signal peptide directing secretion. The propeptide at 24-67 (AVTSQSSGDFVPIESKCNGTIAECSLSTAEEEFEMDSEINRRIL) is removed in mature form. N-linked (GlcNAc...) asparagine glycosylation occurs at Asn41. 2 disulfides stabilise this stretch: Cys85–Cys95 and Cys108–Cys114.

Belongs to the plant rapid alkalinization factor (RALF) family. In terms of processing, proteolytically cleaved, probably by S1P, a subtilisin-like serine protease (subtilase). Expressed in roots, stems, leaves and plants.

It is found in the secreted. Cell signaling peptide that may regulate plant stress, growth, and development. Mediates a rapid alkalinization of extracellular space by mediating a transient increase in the cytoplasmic Ca(2+) concentration leading to a calcium-dependent signaling events through a cell surface receptor and a concomitant activation of some intracellular mitogen-activated protein kinases. This Arabidopsis thaliana (Mouse-ear cress) protein is Protein RALF-like 33 (RALFL33).